Here is a 566-residue protein sequence, read N- to C-terminus: Membrane protein insertase YidC (566 aa).

The chain crosses the membrane as a helical span at residues 6-26 (NLLLLALLFVSFLLYTAWVEE). Residues 30 to 80 (QVAPQVQTEQVDSSVPASVASSANSANLSDGVPNSPQQSSTDATSTELPAS) are disordered. A compositionally biased stretch (polar residues) spans 31–41 (VAPQVQTEQVD). Low complexity predominate over residues 42-58 (SSVPASVASSANSANLS). Positions 61-80 (VPNSPQQSSTDATSTELPAS) are enriched in polar residues. The next 4 helical transmembrane spans lie at 356–376 (LLLF…LITF), 433–453 (LGGC…YWSL), 471–491 (LSVQ…MFFI), and 510–530 (FMPV…VLYW).

This sequence belongs to the OXA1/ALB3/YidC family. Type 1 subfamily. Interacts with the Sec translocase complex via SecD. Specifically interacts with transmembrane segments of nascent integral membrane proteins during membrane integration.

It is found in the cell inner membrane. In terms of biological role, required for the insertion and/or proper folding and/or complex formation of integral membrane proteins into the membrane. Involved in integration of membrane proteins that insert both dependently and independently of the Sec translocase complex, as well as at least some lipoproteins. Aids folding of multispanning membrane proteins. In Psychromonas ingrahamii (strain DSM 17664 / CCUG 51855 / 37), this protein is Membrane protein insertase YidC.